The following is a 165-amino-acid chain: Biosynthetic peptidoglycan transglycosylase (165 aa).

It belongs to the glycosyltransferase 51 family.

The protein localises to the cell inner membrane. It catalyses the reaction [GlcNAc-(1-&gt;4)-Mur2Ac(oyl-L-Ala-gamma-D-Glu-L-Lys-D-Ala-D-Ala)](n)-di-trans,octa-cis-undecaprenyl diphosphate + beta-D-GlcNAc-(1-&gt;4)-Mur2Ac(oyl-L-Ala-gamma-D-Glu-L-Lys-D-Ala-D-Ala)-di-trans,octa-cis-undecaprenyl diphosphate = [GlcNAc-(1-&gt;4)-Mur2Ac(oyl-L-Ala-gamma-D-Glu-L-Lys-D-Ala-D-Ala)](n+1)-di-trans,octa-cis-undecaprenyl diphosphate + di-trans,octa-cis-undecaprenyl diphosphate + H(+). It participates in cell wall biogenesis; peptidoglycan biosynthesis. Functionally, peptidoglycan polymerase that catalyzes glycan chain elongation from lipid-linked precursors. This Neisseria meningitidis protein is Biosynthetic peptidoglycan transglycosylase.